The chain runs to 123 residues: Galanin peptides (123 aa).

A signal peptide spans 1-19; the sequence is MPRGSVLLLASLLLAAALS. Residues 20–30 constitute a propeptide that is removed on maturation; the sequence is ATLGLGSPVKE. A compositionally biased stretch (basic and acidic residues) spans 53-66; it reads SFQDKHGLAGKREL. The segment at 53-79 is disordered; it reads SFQDKHGLAGKRELEPEDEARPGSFDR. Alanine 61 is modified (alanine amide). Serine 116 is modified (phosphoserine).

It belongs to the galanin family.

It localises to the secreted. In terms of biological role, endocrine hormone of the central and peripheral nervous systems that binds and activates the G protein-coupled receptors GALR1, GALR2, and GALR3. This small neuropeptide may regulate diverse physiologic functions including contraction of smooth muscle of the gastrointestinal and genitourinary tract, growth hormone and insulin release and adrenal secretion. This is Galanin peptides (GAL) from Bos taurus (Bovine).